The sequence spans 485 residues: Aspartyl/glutamyl-tRNA(Asn/Gln) amidotransferase subunit B (485 aa).

It belongs to the GatB/GatE family. GatB subfamily. In terms of assembly, heterotrimer of A, B and C subunits.

It catalyses the reaction L-glutamyl-tRNA(Gln) + L-glutamine + ATP + H2O = L-glutaminyl-tRNA(Gln) + L-glutamate + ADP + phosphate + H(+). It carries out the reaction L-aspartyl-tRNA(Asn) + L-glutamine + ATP + H2O = L-asparaginyl-tRNA(Asn) + L-glutamate + ADP + phosphate + 2 H(+). Functionally, allows the formation of correctly charged Asn-tRNA(Asn) or Gln-tRNA(Gln) through the transamidation of misacylated Asp-tRNA(Asn) or Glu-tRNA(Gln) in organisms which lack either or both of asparaginyl-tRNA or glutaminyl-tRNA synthetases. The reaction takes place in the presence of glutamine and ATP through an activated phospho-Asp-tRNA(Asn) or phospho-Glu-tRNA(Gln). The protein is Aspartyl/glutamyl-tRNA(Asn/Gln) amidotransferase subunit B of Gluconobacter oxydans (strain 621H) (Gluconobacter suboxydans).